The following is a 102-amino-acid chain: uncharacterized protein (102 aa).

Residues 5–27 (IYRSNLVIVITLFVSLSYYHTCF) form a helical membrane-spanning segment.

Its subcellular location is the host membrane. This is an uncharacterized protein from Microplitis demolitor (Parasitoid wasp).